The following is a 236-amino-acid chain: Phosphoribosylaminoimidazole-succinocarboxamide synthase (236 aa).

Belongs to the SAICAR synthetase family.

It catalyses the reaction 5-amino-1-(5-phospho-D-ribosyl)imidazole-4-carboxylate + L-aspartate + ATP = (2S)-2-[5-amino-1-(5-phospho-beta-D-ribosyl)imidazole-4-carboxamido]succinate + ADP + phosphate + 2 H(+). It participates in purine metabolism; IMP biosynthesis via de novo pathway; 5-amino-1-(5-phospho-D-ribosyl)imidazole-4-carboxamide from 5-amino-1-(5-phospho-D-ribosyl)imidazole-4-carboxylate: step 1/2. The protein is Phosphoribosylaminoimidazole-succinocarboxamide synthase of Rickettsia felis (strain ATCC VR-1525 / URRWXCal2) (Rickettsia azadi).